The following is a 101-amino-acid chain: Small ribosomal subunit protein uS14 (101 aa).

It belongs to the universal ribosomal protein uS14 family. As to quaternary structure, part of the 30S ribosomal subunit. Contacts proteins S3 and S10.

Its function is as follows. Binds 16S rRNA, required for the assembly of 30S particles and may also be responsible for determining the conformation of the 16S rRNA at the A site. This chain is Small ribosomal subunit protein uS14, found in Shewanella amazonensis (strain ATCC BAA-1098 / SB2B).